Consider the following 260-residue polypeptide: Indole-3-glycerol phosphate synthase (260 aa).

Belongs to the TrpC family.

The enzyme catalyses 1-(2-carboxyphenylamino)-1-deoxy-D-ribulose 5-phosphate + H(+) = (1S,2R)-1-C-(indol-3-yl)glycerol 3-phosphate + CO2 + H2O. It functions in the pathway amino-acid biosynthesis; L-tryptophan biosynthesis; L-tryptophan from chorismate: step 4/5. This chain is Indole-3-glycerol phosphate synthase, found in Bacteroides thetaiotaomicron (strain ATCC 29148 / DSM 2079 / JCM 5827 / CCUG 10774 / NCTC 10582 / VPI-5482 / E50).